Reading from the N-terminus, the 344-residue chain is Succinylglutamate desuccinylase (344 aa).

Positions 63, 66, and 160 each coordinate Zn(2+). Glu-224 is an active-site residue.

Belongs to the AspA/AstE family. Succinylglutamate desuccinylase subfamily. The cofactor is Zn(2+).

The enzyme catalyses N-succinyl-L-glutamate + H2O = L-glutamate + succinate. It participates in amino-acid degradation; L-arginine degradation via AST pathway; L-glutamate and succinate from L-arginine: step 5/5. Functionally, transforms N(2)-succinylglutamate into succinate and glutamate. The chain is Succinylglutamate desuccinylase from Shewanella putrefaciens (strain CN-32 / ATCC BAA-453).